Here is a 268-residue protein sequence, read N- to C-terminus: tRNA (guanine-N(7)-)-methyltransferase (268 aa).

Residues 1–21 (MMAGAEAPQPQKRYYRQRAHS) are disordered. Serine 21 bears the Phosphoserine mark. S-adenosyl-L-methionine is bound by residues glycine 78, glutamate 101, arginine 103, asparagine 134, alanine 135, and leucine 154. Residue aspartate 157 is part of the active site. An alphaC helix region spans residues 158 to 166 (PHFKRTKHK). S-adenosyl-L-methionine-binding residues include threonine 232 and glutamate 234. The segment at 232–240 (TEEGKKVLR) is alpha6 helix.

The protein belongs to the class I-like SAM-binding methyltransferase superfamily. TrmB family. In terms of assembly, catalytic component of the METTL1-WDR4 complex, composed of METTL1 and WDR4. Phosphorylation at Ser-21 by PKB/AKT1 inactivates its methyltransferase activity via a steric interference mechanism in the active site that locally disrupts the catalytic center. Phosphorylation at Ser-21 does not affect the interaction with WDR4.

Its subcellular location is the nucleus. It catalyses the reaction guanosine(46) in tRNA + S-adenosyl-L-methionine = N(7)-methylguanosine(46) in tRNA + S-adenosyl-L-homocysteine. The catalysed reaction is a guanosine in mRNA + S-adenosyl-L-methionine = an N(7)-methylguanosine in mRNA + S-adenosyl-L-homocysteine. It carries out the reaction a guanosine in miRNA + S-adenosyl-L-methionine = an N(7)-methylguanosine in miRNA + S-adenosyl-L-homocysteine. It functions in the pathway tRNA modification; N(7)-methylguanine-tRNA biosynthesis. Its function is as follows. Catalytic component of METTL1-WDR4 methyltransferase complex that mediates the formation of N(7)-methylguanine in a subset of RNA species, such as tRNAs, mRNAs and microRNAs (miRNAs). Catalyzes the formation of N(7)-methylguanine at position 46 (m7G46) in a large subset of tRNAs that contain the 5'-RAGGU-3' motif within the variable loop. M7G46 interacts with C13-G22 in the D-loop to stabilize tRNA tertiary structure and protect tRNAs from decay. Also acts as a methyltransferase for a subset of internal N(7)-methylguanine in mRNAs. Internal N(7)-methylguanine methylation of mRNAs in response to stress promotes their relocalization to stress granules, thereby suppressing their translation. Also methylates a specific subset of miRNAs, such as let-7. N(7)-methylguanine methylation of let-7 miRNA promotes let-7 miRNA processing by disrupting an inhibitory secondary structure within the primary miRNA transcript (pri-miRNA). Acts as a regulator of embryonic stem cell self-renewal and differentiation. The polypeptide is tRNA (guanine-N(7)-)-methyltransferase (Mus musculus (Mouse)).